Here is a 321-residue protein sequence, read N- to C-terminus: Polygalacturonan/rhamnogalacturonan transport system permease protein YteP (321 aa).

An ABC transmembrane type-1 domain is found at 1-144; the sequence is MKTAEAQAPA…YIPHFMSWVI (144 aa). A run of 3 helical transmembrane segments spans residues 21–41, 63–83, and 123–143; these read RKRL…ILPG, YQPF…FIRL, and IALF…MSWV.

It belongs to the binding-protein-dependent transport system permease family. As to quaternary structure, the complex is probably composed of two ATP-binding proteins (MsmX), two transmembrane proteins (YtcP and YteP) and a solute-binding protein (YtcQ).

The protein localises to the cell membrane. Functionally, involved in pectin degradation. Part of the ABC transporter complex YtcQP-YteP involved in the uptake of polygalacturonan and rhamnogalacturonan type I. Responsible for the translocation of the substrate across the membrane. This chain is Polygalacturonan/rhamnogalacturonan transport system permease protein YteP (yteP), found in Bacillus subtilis (strain 168).